We begin with the raw amino-acid sequence, 524 residues long: RNA-binding protein 39 (524 aa).

A disordered region spans residues 1-146 (MADDIDIEAM…PVREPIDNLT (146 aa)). N-acetylalanine is present on Ala-2. A compositionally biased stretch (basic and acidic residues) spans 14-32 (PYKKDENKLSSANGHEERS). Composition is skewed to basic residues over residues 33 to 56 (KKRK…KERK) and 64 to 95 (KKSK…RGRY). Tyr-95 carries the phosphotyrosine modification. A phosphoserine mark is found at Ser-97 and Ser-100. A Glycyl lysine isopeptide (Lys-Gly) (interchain with G-Cter in SUMO2) cross-link involves residue Lys-111. At Ser-117 the chain carries Phosphoserine. A Glycyl lysine isopeptide (Lys-Gly) (interchain with G-Cter in SUMO2) cross-link involves residue Lys-119. Positions 119–130 (KLSRRRSRSKSP) are enriched in basic residues. 2 positions are modified to phosphoserine: Ser-121 and Ser-136. The span at 131-146 (FRKDKSPVREPIDNLT) shows a compositional bias: basic and acidic residues. Thr-146 carries the phosphothreonine modification. One can recognise an RRM 1 domain in the interval 153–230 (RTVFCMQLAA…VPIIVQASQA (78 aa)). Lys-244 is covalently cross-linked (Glycyl lysine isopeptide (Lys-Gly) (interchain with G-Cter in SUMO2)). Positions 250-328 (MRLYVGSLHF…RPMKVGHVTE (79 aa)) constitute an RRM 2 domain. Positions 291 to 355 (KGYGFITFSD…RTGIDLGTTG (65 aa)) are activating domain. Positions 291–400 (KGYGFITFSD…ADLQTRLSQQ (110 aa)) are interaction with JUN. Residues Ser-334, Ser-337, and Ser-341 each carry the phosphoserine modification. The interval 355-400 (GRLQLMARLAEGTGLQIPPAAQQALQMSGSLAFGAVADLQTRLSQQ) is interaction with ESR1 and ESR2. The interval 400 to 524 (QTEASALAAA…ATQLLVPSRR (125 aa)) is interaction with NCOA6. An RRM 3 domain is found at 439-502 (EIKDDVIEEC…KMITAAYVPL (64 aa)).

The protein belongs to the splicing factor SR family. As to quaternary structure, interacts with NCOA6 and JUN. Interacts with ESR1 and ESR2, in the presence of estradiol (E2). Interacts with RSRC1 (via Arg/Ser-rich domain). Interacts with SF3B1. Interacts with ZNF106 (via N-terminus).

It is found in the nucleus speckle. RNA-binding protein that acts as a pre-mRNA splicing factor. Acts by promoting exon inclusion via regulation of exon cassette splicing. Also acts as a transcriptional coactivator for steroid nuclear receptors ESR1/ER-alpha and ESR2/ER-beta, and JUN/AP-1, independently of the pre-mRNA splicing factor activity. The protein is RNA-binding protein 39 (RBM39) of Pongo abelii (Sumatran orangutan).